A 294-amino-acid chain; its full sequence is Glycine--tRNA ligase alpha subunit (294 aa).

Belongs to the class-II aminoacyl-tRNA synthetase family. Tetramer of two alpha and two beta subunits.

It is found in the cytoplasm. It catalyses the reaction tRNA(Gly) + glycine + ATP = glycyl-tRNA(Gly) + AMP + diphosphate. The protein is Glycine--tRNA ligase alpha subunit of Oleidesulfovibrio alaskensis (strain ATCC BAA-1058 / DSM 17464 / G20) (Desulfovibrio alaskensis).